Consider the following 75-residue polypeptide: MLVLSRKNNESIMLGKDIEIKILGIEDGKVKLGIEAPKDVEIYRKEIYLEIQEENKAASEQKQDWSQLKGLFTKK.

It belongs to the CsrA/RsmA family. As to quaternary structure, homodimer; the beta-strands of each monomer intercalate to form a hydrophobic core, while the alpha-helices form wings that extend away from the core.

The protein resides in the cytoplasm. Functionally, a translational regulator that binds mRNA to regulate translation initiation and/or mRNA stability. Usually binds in the 5'-UTR at or near the Shine-Dalgarno sequence preventing ribosome-binding, thus repressing translation. Its main target seems to be the major flagellin gene, while its function is anatagonized by FliW. This Alkaliphilus metalliredigens (strain QYMF) protein is Translational regulator CsrA.